A 561-amino-acid polypeptide reads, in one-letter code: MLLEQQKQLISLIQAAVAQCLPEAQAQVQLERPKVAAHGDIATNVAMQLAKPARRNPRELAQGIVDALMAQPQARELIQDAEIAGPGFINFRLTPAARQAVVQAVASQADAYGRAPRNGEKVLVEFVSANPTGPLHVGHARQAALGDAICRLYDASGWDVTREFYYNDAGNQIDNLAISVQARGRGIAPDAPDYPTDGYKGDYIVEIARDFAARKSVQASDGQPVTATGDLDSLDDIRAFAVAYLRREQDLDLQAFGLAFDNYFLESSLYASGRVQETVDTLVAKGHTYEEGGALWLRTTELGTGDDKDRVMRKSEGGYTYFVPDVAYHKVKWERGFHHAVNIQGSDHHGTVARVRAGLQGLEAGIPKDFPAYVLHKMVKVMRGGEEVKISKRAGSYVTMRDLIDWVGRDAVRYFLIQRRADTEFVFDIDLALSKSDENPVYYIQYAHARICTMIGNSGASAAEIAQADTALLTAPSEYALLQRLAEFPQVVALAAQELAPHHVAFWLRDCASDFHAWYNAERVLVDEPALKLARLRLAATTRQVLANGLALLGVSAPDRM.

Positions 129–139 match the 'HIGH' region motif; the sequence is ANPTGPLHVGH.

It belongs to the class-I aminoacyl-tRNA synthetase family. As to quaternary structure, monomer.

The protein localises to the cytoplasm. It carries out the reaction tRNA(Arg) + L-arginine + ATP = L-arginyl-tRNA(Arg) + AMP + diphosphate. The polypeptide is Arginine--tRNA ligase (Bordetella parapertussis (strain 12822 / ATCC BAA-587 / NCTC 13253)).